The chain runs to 126 residues: Fluoride-specific ion channel FluC (126 aa).

4 helical membrane passes run Ser4–Ile24, Leu35–Phe55, Phe68–Val88, and Ile103–Leu123. Residues Gly75 and Ser78 each coordinate Na(+).

Belongs to the fluoride channel Fluc/FEX (TC 1.A.43) family.

The protein localises to the cell inner membrane. It carries out the reaction fluoride(in) = fluoride(out). Na(+) is not transported, but it plays an essential structural role and its presence is essential for fluoride channel function. Its function is as follows. Fluoride-specific ion channel. Important for reducing fluoride concentration in the cell, thus reducing its toxicity. The protein is Fluoride-specific ion channel FluC of Paraburkholderia xenovorans (strain LB400).